We begin with the raw amino-acid sequence, 225 residues long: Cyanamide hydratase DDI2 (225 aa).

The HD domain maps to 52-162 (VLNHSLRVFQ…LQIATTLDNV (111 aa)).

This sequence belongs to the cyanamide dehydrase family. As to quaternary structure, homohexamer. It depends on Zn(2+) as a cofactor.

It catalyses the reaction urea = cyanamide + H2O. Cyanamide hydratase involved in the detoxification and/or utilization of cyanamide, a toxic nitrile compound distributed widely in the environment. The sequence is that of Cyanamide hydratase DDI2 from Saccharomyces cerevisiae (strain ATCC 204508 / S288c) (Baker's yeast).